Consider the following 149-residue polypeptide: Small ribosomal subunit protein eS19 (149 aa).

It belongs to the eukaryotic ribosomal protein eS19 family.

The sequence is that of Small ribosomal subunit protein eS19 (RPS19) from Mya arenaria (Soft-shell clam).